The following is a 356-amino-acid chain: MITKQQVLEFLKNYDLENITIATICSHSSLQIFDGARKEGFRTLGICVGKPPKFYEAFPKAKPDEYLVVDSYADIMNKAEELRQKNTIIIPHGSVVAYLGTENFADMAVPTFGNRAVLEWESDRDKEREWLLGAGIHMPGKVDDPHDINGPVMVKYDGAKGGKGFFVAKTYEEFEELIDRTQKYTIQEFITGTRYYLHYFYSPIRNEGYTLSKGSLELLSMDRRVESNADEIFRLGSPRELVGAGIRPTYVVTGNMPLVARESLLPLIFSLGERVVEESLGLFGGMIGSFCLETVFTDTLEIKVFEISARIVAGTNLYISGSPYADLMEENLSTGRRIAREIKIAAQTGQLDKIIS.

Residues H27 and S94 each contribute to the 5-amino-1-(5-phospho-beta-D-ribosyl)imidazole-4-carboxamide site. Positions 101–333 constitute an ATP-grasp domain; that stretch reads TENFADMAVP…YADLMEENLS (233 aa). ATP contacts are provided by residues 145–196 and E226; that span reads PHDI…TRYY. N255 is a 5-amino-1-(5-phospho-beta-D-ribosyl)imidazole-4-carboxamide binding site. Residues E293 and E306 each coordinate Mg(2+).

It belongs to the phosphohexose mutase family. Mg(2+) is required as a cofactor. It depends on Mn(2+) as a cofactor.

It catalyses the reaction 5-amino-1-(5-phospho-beta-D-ribosyl)imidazole-4-carboxamide + formate + ATP = 5-formamido-1-(5-phospho-D-ribosyl)imidazole-4-carboxamide + ADP + phosphate. It participates in purine metabolism; IMP biosynthesis via de novo pathway; 5-formamido-1-(5-phospho-D-ribosyl)imidazole-4-carboxamide from 5-amino-1-(5-phospho-D-ribosyl)imidazole-4-carboxamide (formate route): step 1/1. Its function is as follows. Catalyzes the ATP- and formate-dependent formylation of 5-aminoimidazole-4-carboxamide-1-beta-d-ribofuranosyl 5'-monophosphate (AICAR) to 5-formaminoimidazole-4-carboxamide-1-beta-d-ribofuranosyl 5'-monophosphate (FAICAR) in the absence of folates. The chain is 5-formaminoimidazole-4-carboxamide-1-(beta)-D-ribofuranosyl 5'-monophosphate synthetase from Methanosarcina barkeri (strain Fusaro / DSM 804).